Reading from the N-terminus, the 419-residue chain is Squamosa promoter-binding-like protein 2 (419 aa).

Residues 77–96 (SAEVRTHNFTSETGESLPGE) form a disordered region. The SBP-type zinc finger occupies 166-243 (TPHCQVEGCN…SDHNARRRKP (78 aa)). The Zn(2+) site is built by Cys169, Cys174, Cys191, His194, Cys210, Cys213, His217, and Cys229. A Bipartite nuclear localization signal motif is present at residues 226 to 242 (KRSCRRRLSDHNARRRK). The disordered stretch occupies residues 230-249 (RRRLSDHNARRRKPNPGRTY).

Zn(2+) is required as a cofactor.

It localises to the nucleus. Functionally, trans-acting factor that binds specifically to the consensus nucleotide sequence 5'-TNCGTACAA-3'. This is Squamosa promoter-binding-like protein 2 (SPL2) from Arabidopsis thaliana (Mouse-ear cress).